The primary structure comprises 174 residues: Regenerating islet-derived protein 3-gamma (174 aa).

An N-terminal signal peptide occupies residues methionine 1–glycine 26. The propeptide occupies glutamate 27–arginine 37. 3 cysteine pairs are disulfide-bonded: cysteine 40–cysteine 51, cysteine 68–cysteine 170, and cysteine 145–cysteine 162. The 125-residue stretch at tyrosine 47–lysine 171 folds into the C-type lectin domain. The interval tryptophan 103–glycine 118 is sufficient to activate EXTL3. Histidine 107 is a Zn(2+) binding site. The EPN motif lies at glutamate 114–asparagine 116. Zn(2+) is bound by residues glutamate 121 and histidine 144.

As to quaternary structure, forms a hexameric membrane-permeabilizing oligomeric pore on membrane phospholipids. The hexamer is formed by three dimers related by helical symmetry. Forms filaments, filamentation traps pore complexes and limits damage to host cells. Interacts with EXTL3. In terms of processing, proteolytic processing by trypsin removes an inhibitory N-terminal propeptide and is essential for peptidoglycan binding and antibacterial activity. Predominantly expressed in the small intestine, including Paneth cells (at protein level). Hardly detectable in the colon (at protein level). Highly expressed in the lung epithelium during methicillin-resistant S.aureus infection and allergic airway inflammation (at protein level). Skin injury increases its epidermal expression. Also expressed in the pancreas. Expressed by nocireceptors.

It is found in the secreted. The protein resides in the cytoplasm. Lipopolysaccharide inhibits pore-forming activity, explaining why is bactericidal for Gram-positive but not Gram-negative bacteria. Functionally, bactericidal C-type lectin which acts exclusively against Gram-positive bacteria and mediates bacterial killing by binding to surface-exposed carbohydrate moieties of peptidoglycan. Restricts bacterial colonization of the intestinal epithelial surface and consequently limits activation of adaptive immune responses by the microbiota. Its function is as follows. Acts as a hormone in response to different stimuli like anti-inflammatory signals, such as IL17A, or gut microbiome. Is secreted by different cell types to activate its receptor EXTL3 and induce cell specific signaling pathways. Induced by IL17A in keratinocytes, regulates keratinocyte proliferation and differentiation after skin injury. In parallel, inhibits skin inflammation through the inhibition of inflammatory cytokines such as IL6 and TNF. Induced by IL22 in lung epithelial cells, inhibits cytokine production and regulates allergic airway inflammation. Induced in small intestine by inulin-enriched diet and Lactobacillus gasseri enriched microbiome, plays a role in the improvement of gut barrier function, the regulation of energy balance and glucose levels. Modulates microbiota composition in duodenal contents. Produced by nociceptor in response to endotoxins, prevents endotoxic death by targeting kynurenine pathway in microglia. Has bacteriostatic activity. In terms of biological role, has bactericidal activity against L.monocytogenes and methicillin-resistant S.aureus. In Mus musculus (Mouse), this protein is Regenerating islet-derived protein 3-gamma.